Consider the following 277-residue polypeptide: Ribonuclease HII (277 aa).

One can recognise an RNase H type-2 domain in the interval 72–260 (EYIAGIDEAG…IKEMIEMKKE (189 aa)). The a divalent metal cation site is built by Asp-78, Glu-79, and Asp-170.

This sequence belongs to the RNase HII family. The cofactor is Mn(2+). Mg(2+) is required as a cofactor.

The protein localises to the cytoplasm. It catalyses the reaction Endonucleolytic cleavage to 5'-phosphomonoester.. In terms of biological role, endonuclease that specifically degrades the RNA of RNA-DNA hybrids. The chain is Ribonuclease HII from Geobacillus sp. (strain WCH70).